The primary structure comprises 227 residues: Cytochrome c oxidase subunit 2 (227 aa).

Residues 1–14 (MAHPFQTGLQDATS) lie on the Mitochondrial intermembrane side of the membrane. A helical transmembrane segment spans residues 15-45 (PIMEELLHFHDHTLMIVFLISSLVLYIISIM). Over 46-59 (LTTKLTHTNTMDAQ) the chain is Mitochondrial matrix. Residues 60–87 (EVETVWTILPAIILIMIALPSLRILYMM) traverse the membrane as a helical segment. Residues 88 to 227 (DEINNPSLTV…YFEKWSASML (140 aa)) lie on the Mitochondrial intermembrane side of the membrane. Cu cation is bound by residues histidine 161, cysteine 196, glutamate 198, cysteine 200, histidine 204, and methionine 207. Glutamate 198 contributes to the Mg(2+) binding site. Tyrosine 218 bears the Phosphotyrosine mark.

It belongs to the cytochrome c oxidase subunit 2 family. As to quaternary structure, component of the cytochrome c oxidase (complex IV, CIV), a multisubunit enzyme composed of 14 subunits. The complex is composed of a catalytic core of 3 subunits MT-CO1, MT-CO2 and MT-CO3, encoded in the mitochondrial DNA, and 11 supernumerary subunits COX4I, COX5A, COX5B, COX6A, COX6B, COX6C, COX7A, COX7B, COX7C, COX8 and NDUFA4, which are encoded in the nuclear genome. The complex exists as a monomer or a dimer and forms supercomplexes (SCs) in the inner mitochondrial membrane with NADH-ubiquinone oxidoreductase (complex I, CI) and ubiquinol-cytochrome c oxidoreductase (cytochrome b-c1 complex, complex III, CIII), resulting in different assemblies (supercomplex SCI(1)III(2)IV(1) and megacomplex MCI(2)III(2)IV(2)). Found in a complex with TMEM177, COA6, COX18, COX20, SCO1 and SCO2. Interacts with TMEM177 in a COX20-dependent manner. Interacts with COX20. Interacts with COX16. Cu cation serves as cofactor.

The protein resides in the mitochondrion inner membrane. The enzyme catalyses 4 Fe(II)-[cytochrome c] + O2 + 8 H(+)(in) = 4 Fe(III)-[cytochrome c] + 2 H2O + 4 H(+)(out). Component of the cytochrome c oxidase, the last enzyme in the mitochondrial electron transport chain which drives oxidative phosphorylation. The respiratory chain contains 3 multisubunit complexes succinate dehydrogenase (complex II, CII), ubiquinol-cytochrome c oxidoreductase (cytochrome b-c1 complex, complex III, CIII) and cytochrome c oxidase (complex IV, CIV), that cooperate to transfer electrons derived from NADH and succinate to molecular oxygen, creating an electrochemical gradient over the inner membrane that drives transmembrane transport and the ATP synthase. Cytochrome c oxidase is the component of the respiratory chain that catalyzes the reduction of oxygen to water. Electrons originating from reduced cytochrome c in the intermembrane space (IMS) are transferred via the dinuclear copper A center (CU(A)) of subunit 2 and heme A of subunit 1 to the active site in subunit 1, a binuclear center (BNC) formed by heme A3 and copper B (CU(B)). The BNC reduces molecular oxygen to 2 water molecules using 4 electrons from cytochrome c in the IMS and 4 protons from the mitochondrial matrix. The polypeptide is Cytochrome c oxidase subunit 2 (MT-CO2) (Ailuropoda melanoleuca (Giant panda)).